We begin with the raw amino-acid sequence, 60 residues long: Short neurotoxin 1 (60 aa).

Cystine bridges form between Cys3/Cys22, Cys17/Cys39, Cys41/Cys52, and Cys53/Cys58.

This sequence belongs to the three-finger toxin family. Short-chain subfamily. Type I alpha-neurotoxin sub-subfamily. In terms of tissue distribution, expressed by the venom gland.

The protein resides in the secreted. Functionally, binds to muscle nicotinic acetylcholine receptor (nAChR) and inhibit acetylcholine from binding to the receptor, thereby impairing neuromuscular transmission. This chain is Short neurotoxin 1, found in Dendroaspis polylepis polylepis (Black mamba).